A 318-amino-acid chain; its full sequence is Holliday junction branch migration complex subunit RuvB (318 aa).

Residues 1 to 168 (MPENLEIRPS…FGYVAKIVDY (168 aa)) are large ATPase domain (RuvB-L). The ATP site is built by Ile7, Arg8, Gly49, Lys52, Thr53, Thr54, Arg158, Tyr168, and Arg205. Thr53 serves as a coordination point for Mg(2+). The small ATPAse domain (RuvB-S) stretch occupies residues 169–239 (TLEDMIQIIR…IVNKTFDSIG (71 aa)). A head domain (RuvB-H) region spans residues 242–318 (NQGLSQINIE…RDYLLELKTN (77 aa)). 3 residues coordinate DNA: Arg278, Lys297, and Arg302.

Belongs to the RuvB family. Homohexamer. Forms an RuvA(8)-RuvB(12)-Holliday junction (HJ) complex. HJ DNA is sandwiched between 2 RuvA tetramers; dsDNA enters through RuvA and exits via RuvB. An RuvB hexamer assembles on each DNA strand where it exits the tetramer. Each RuvB hexamer is contacted by two RuvA subunits (via domain III) on 2 adjacent RuvB subunits; this complex drives branch migration. In the full resolvosome a probable DNA-RuvA(4)-RuvB(12)-RuvC(2) complex forms which resolves the HJ.

The protein localises to the cytoplasm. It catalyses the reaction ATP + H2O = ADP + phosphate + H(+). The RuvA-RuvB-RuvC complex processes Holliday junction (HJ) DNA during genetic recombination and DNA repair, while the RuvA-RuvB complex plays an important role in the rescue of blocked DNA replication forks via replication fork reversal (RFR). RuvA specifically binds to HJ cruciform DNA, conferring on it an open structure. The RuvB hexamer acts as an ATP-dependent pump, pulling dsDNA into and through the RuvAB complex. RuvB forms 2 homohexamers on either side of HJ DNA bound by 1 or 2 RuvA tetramers; 4 subunits per hexamer contact DNA at a time. Coordinated motions by a converter formed by DNA-disengaged RuvB subunits stimulates ATP hydrolysis and nucleotide exchange. Immobilization of the converter enables RuvB to convert the ATP-contained energy into a lever motion, pulling 2 nucleotides of DNA out of the RuvA tetramer per ATP hydrolyzed, thus driving DNA branch migration. The RuvB motors rotate together with the DNA substrate, which together with the progressing nucleotide cycle form the mechanistic basis for DNA recombination by continuous HJ branch migration. Branch migration allows RuvC to scan DNA until it finds its consensus sequence, where it cleaves and resolves cruciform DNA. The polypeptide is Holliday junction branch migration complex subunit RuvB (Mesomycoplasma hyopneumoniae (strain 232) (Mycoplasma hyopneumoniae)).